Reading from the N-terminus, the 504-residue chain is Probable alpha-L-arabinofuranosidase C (504 aa).

4 N-linked (GlcNAc...) asparagine glycosylation sites follow: Asn152, Asn181, Asn269, and Asn467.

The protein belongs to the glycosyl hydrolase 51 family.

It is found in the secreted. The catalysed reaction is Hydrolysis of terminal non-reducing alpha-L-arabinofuranoside residues in alpha-L-arabinosides.. It functions in the pathway glycan metabolism; L-arabinan degradation. Alpha-L-arabinofuranosidase involved in the degradation of arabinoxylan, a major component of plant hemicellulose. Acts only on small linear 1,5-alpha-linked L-arabinofuranosyl oligosaccharides. The protein is Probable alpha-L-arabinofuranosidase C (abfC) of Aspergillus terreus (strain NIH 2624 / FGSC A1156).